A 201-amino-acid polypeptide reads, in one-letter code: Recombination protein RecR (201 aa).

The C4-type zinc finger occupies Cys57–Cys72. The Toprim domain maps to Gly81 to Pro176.

The protein belongs to the RecR family.

In terms of biological role, may play a role in DNA repair. It seems to be involved in an RecBC-independent recombinational process of DNA repair. It may act with RecF and RecO. The chain is Recombination protein RecR from Salmonella agona (strain SL483).